A 307-amino-acid chain; its full sequence is Methionyl-tRNA formyltransferase (307 aa).

108 to 111 contacts (6S)-5,6,7,8-tetrahydrofolate; sequence SLLP.

It belongs to the Fmt family.

It catalyses the reaction L-methionyl-tRNA(fMet) + (6R)-10-formyltetrahydrofolate = N-formyl-L-methionyl-tRNA(fMet) + (6S)-5,6,7,8-tetrahydrofolate + H(+). Its function is as follows. Attaches a formyl group to the free amino group of methionyl-tRNA(fMet). The formyl group appears to play a dual role in the initiator identity of N-formylmethionyl-tRNA by promoting its recognition by IF2 and preventing the misappropriation of this tRNA by the elongation apparatus. The polypeptide is Methionyl-tRNA formyltransferase (Xanthomonas campestris pv. campestris (strain 8004)).